A 620-amino-acid chain; its full sequence is 1-deoxy-D-xylulose-5-phosphate synthase (620 aa).

Thiamine diphosphate-binding positions include His-80 and 121-123 (GHS). Asp-152 is a Mg(2+) binding site. Residues 153-154 (GA), Asn-181, Tyr-288, and Glu-370 each bind thiamine diphosphate. Asn-181 provides a ligand contact to Mg(2+).

It belongs to the transketolase family. DXPS subfamily. As to quaternary structure, homodimer. Mg(2+) is required as a cofactor. Requires thiamine diphosphate as cofactor.

It catalyses the reaction D-glyceraldehyde 3-phosphate + pyruvate + H(+) = 1-deoxy-D-xylulose 5-phosphate + CO2. The protein operates within metabolic intermediate biosynthesis; 1-deoxy-D-xylulose 5-phosphate biosynthesis; 1-deoxy-D-xylulose 5-phosphate from D-glyceraldehyde 3-phosphate and pyruvate: step 1/1. Catalyzes the acyloin condensation reaction between C atoms 2 and 3 of pyruvate and glyceraldehyde 3-phosphate to yield 1-deoxy-D-xylulose-5-phosphate (DXP). The protein is 1-deoxy-D-xylulose-5-phosphate synthase of Escherichia fergusonii (strain ATCC 35469 / DSM 13698 / CCUG 18766 / IAM 14443 / JCM 21226 / LMG 7866 / NBRC 102419 / NCTC 12128 / CDC 0568-73).